The sequence spans 177 residues: CDP-archaeol synthase (177 aa).

The next 5 helical transmembrane spans lie at 6–26 (LFAS…ACIF), 54–74 (CIFG…LVDF), 90–110 (VILA…GSFI), 124–144 (LLDQ…VAPI), and 148–168 (MIII…IIAY).

It belongs to the CDP-archaeol synthase family. It depends on Mg(2+) as a cofactor.

It localises to the cell membrane. It carries out the reaction 2,3-bis-O-(geranylgeranyl)-sn-glycerol 1-phosphate + CTP + H(+) = CDP-2,3-bis-O-(geranylgeranyl)-sn-glycerol + diphosphate. Its pathway is membrane lipid metabolism; glycerophospholipid metabolism. Catalyzes the formation of CDP-2,3-bis-(O-geranylgeranyl)-sn-glycerol (CDP-archaeol) from 2,3-bis-(O-geranylgeranyl)-sn-glycerol 1-phosphate (DGGGP) and CTP. This reaction is the third ether-bond-formation step in the biosynthesis of archaeal membrane lipids. In Methanocaldococcus jannaschii (strain ATCC 43067 / DSM 2661 / JAL-1 / JCM 10045 / NBRC 100440) (Methanococcus jannaschii), this protein is CDP-archaeol synthase.